The chain runs to 405 residues: MSVCESKAVVQQQLQQHLQQQAAAAVVAVAQQQQAQAQAQAQAQAQQQQQAPQVVVPMTPQHLTPQQQQQSTQSIADYLAQLLKDRKQLAAFPNVFTHVERLLDEEIARVRASLFQINGVKKEPLTLPEPEGSVVTMNEKVYVPVREHPDFNFVGRILGPRGMTAKQLEQETGCKIMVRGKGSMRDKKKEDANRGKPNWEHLSDDLHVLITVEDTENRATVKLAQAVAEVQKLLVPQAEGEDELKKRQLMELAIINGTYRDTTAKSVAVCDEEWRRLVAASDSRLLTSTGLPGLAAQIRAPAAAPLGAPLILNPRMTVPTTAASILSAQAAPTAAFDQTGHGMIFAPYDYANYAALAGNPLLTEYADHSVGAIKQQRRLATNREHPYQRATVGVPAKPAGFIEIQ.

A KH domain is found at 142 to 210 (YVPVREHPDF…HLSDDLHVLI (69 aa)).

In terms of assembly, homodimer. Interacts with Sxl; promoting nuclear retention of msl-2 transcripts. During embryogenesis, expression is seen in mesodermal precursors of somatic, visceral and pharyngeal muscle. Later in embryogenesis, expression is restricted to heart and muscle attachment sites of the epidermis. During onset of metamorphosis, expression is seen in muscle and muscle attachment cells.

The protein resides in the nucleus. Its function is as follows. RNA-binding protein involved in muscle development and dosage compensation. Vital role in steroid regulation of muscle development and to control heart rate. Required during embryogenesis, in late stages of somatic muscle development, for myotube migration and during metamorphosis for muscle reorganization. Required for integrin-mediated cell-adhesion in wing blade. Together with Sxl, acts as an inhibitor of dosage compensation in females by preventing production of msl-2 protein, an essential component of the MSL complex. Specifically binds to the 5'-UTR of msl-2 transcripts and cooperates with Sxl to promote nuclear retention of msl-2 mRNAs. This Drosophila melanogaster (Fruit fly) protein is Protein held out wings (how).